A 229-amino-acid polypeptide reads, in one-letter code: Large ribosomal subunit protein uL1 (229 aa).

This sequence belongs to the universal ribosomal protein uL1 family. In terms of assembly, part of the 50S ribosomal subunit.

Its function is as follows. Binds directly to 23S rRNA. The L1 stalk is quite mobile in the ribosome, and is involved in E site tRNA release. Functionally, protein L1 is also a translational repressor protein, it controls the translation of the L11 operon by binding to its mRNA. This is Large ribosomal subunit protein uL1 from Actinobacillus pleuropneumoniae serotype 5b (strain L20).